The sequence spans 421 residues: G/T mismatch-specific thymine DNA glycosylase (421 aa).

Positions 45-108 (PNMATVTEQQ…STKSKEKQEK (64 aa)) are disordered. Over residues 77 to 89 (RAAEPQEPVEPKK) the composition is skewed to basic and acidic residues. The span at 91–100 (ATSKKSGKST) shows a compositional bias: basic residues. Residues K114 and K259 each participate in a glycyl lysine isopeptide (Lys-Gly) (interchain with G-Cter in SUMO2) cross-link. K341 participates in a covalent cross-link: Glycyl lysine isopeptide (Lys-Gly) (interchain with G-Cter in SUMO); alternate. K341 participates in a covalent cross-link: Glycyl lysine isopeptide (Lys-Gly) (interchain with G-Cter in SUMO2); alternate.

It belongs to the uracil-DNA glycosylase (UDG) superfamily. TDG/mug family. In terms of assembly, homodimer. Interacts with AICDA and GADD45A. Post-translationally, sumoylation on Lys-341 by either SUMO1 or SUMO2 induces dissociation of the product DNA.

The protein resides in the nucleus. The catalysed reaction is Hydrolyzes mismatched double-stranded DNA and polynucleotides, releasing free thymine.. Functionally, DNA glycosylase that plays a key role in active DNA demethylation: specifically recognizes and binds 5-formylcytosine (5fC) and 5-carboxylcytosine (5caC) in the context of CpG sites and mediates their excision through base-excision repair (BER) to install an unmethylated cytosine. Cannot remove 5-hydroxymethylcytosine (5hmC). According to an alternative model, involved in DNA demethylation by mediating DNA glycolase activity toward 5-hydroxymethyluracil (5hmU) produced by deamination of 5hmC. Also involved in DNA repair by acting as a thymine-DNA glycosylase that mediates correction of G/T mispairs to G/C pairs: in the DNA of higher eukaryotes, hydrolytic deamination of 5-methylcytosine to thymine leads to the formation of G/T mismatches. Its role in the repair of canonical base damage is however minor compared to its role in DNA demethylation. It is capable of hydrolyzing the carbon-nitrogen bond between the sugar-phosphate backbone of the DNA and a mispaired thymine. In addition to the G/T, it can remove thymine also from C/T and T/T mispairs in the order G/T &gt;&gt; C/T &gt; T/T. It has no detectable activity on apyrimidinic sites and does not catalyze the removal of thymine from A/T pairs or from single-stranded DNA. It can also remove uracil and 5-bromouracil from mispairs with guanine. This Mus musculus (Mouse) protein is G/T mismatch-specific thymine DNA glycosylase (Tdg).